The following is a 264-amino-acid chain: Thymidylate synthase (264 aa).

Residue R21 participates in dUMP binding. H51 is a binding site for (6R)-5,10-methylene-5,6,7,8-tetrahydrofolate. 126 to 127 is a dUMP binding site; it reads RR. C146 serves as the catalytic Nucleophile. DUMP-binding positions include 166–169, N177, and 207–209; these read RSAD and HLY. D169 provides a ligand contact to (6R)-5,10-methylene-5,6,7,8-tetrahydrofolate. A263 serves as a coordination point for (6R)-5,10-methylene-5,6,7,8-tetrahydrofolate.

This sequence belongs to the thymidylate synthase family. Bacterial-type ThyA subfamily. Homodimer.

Its subcellular location is the cytoplasm. It carries out the reaction dUMP + (6R)-5,10-methylene-5,6,7,8-tetrahydrofolate = 7,8-dihydrofolate + dTMP. The protein operates within pyrimidine metabolism; dTTP biosynthesis. Catalyzes the reductive methylation of 2'-deoxyuridine-5'-monophosphate (dUMP) to 2'-deoxythymidine-5'-monophosphate (dTMP) while utilizing 5,10-methylenetetrahydrofolate (mTHF) as the methyl donor and reductant in the reaction, yielding dihydrofolate (DHF) as a by-product. This enzymatic reaction provides an intracellular de novo source of dTMP, an essential precursor for DNA biosynthesis. This Aromatoleum aromaticum (strain DSM 19018 / LMG 30748 / EbN1) (Azoarcus sp. (strain EbN1)) protein is Thymidylate synthase.